Here is a 678-residue protein sequence, read N- to C-terminus: MSTQNGMYYSLLEWFKTLNLNAPHANAEELADGVALAQALNQFAPESFTNSWLSKIKSSAVGGNWRLRMSNLKKVVEGVYEYYSDVLNYTLQHDFVKPDVQAIAEKCDLSELERLLQLVLGCAVNCAKKQSYICEIMCLEEELQANIMRALQELESSTRQTTEGGVVSSLSRNSLSGMLDGNAKALEERDAMAQKCFETEKKMLLLIDEKTNLQQELHKLQLEFARLEHNTIGDDGVSLGPIQAGSVRYNELRRQLELVKEELLQSEGAREDLKIKAQQQETDLLHMQQRIDELMKSTAELTALKDEVDVLRESTDKLKVCEAQLETYKKKLEEYNDLKKHVKMLEERSADYVQQNAQFEEDAKRYANTKGQVELFKKEIQDLHAQLDNESSKNVKLEFDNKNLESKTLALQREKDNLLKERDNLREAFDELKCGQLSTNSGSLTGTTMSRELQPPAMMDKMQRLEAENKALREGQGGQTALAQLLDDANKRCEHLREQLKTANERILSLSHASQSDDPILKENEFSKQIKQLMELNEQKTLQIEESATQNSTMQCKITQLESTLATREQELMAYEVKYRKCIERAKEVIKNIDPRIASVMEANNLEKSVDVIEEESKTKMSGMEEQLMASAFYRLGVNAQRDAVDSKLALLMGSGQTFLARQRQSAPRKPLTTMKSK.

Residues 1-155 (MSTQNGMYYS…NIMRALQELE (155 aa)) form an interaction with microtubules region. The region spanning 5–123 (NGMYYSLLEW…RLLQLVLGCA (119 aa)) is the Calponin-homology (CH) domain. Coiled-coil stretches lie at residues 135-435 (EIMC…LKCG) and 479-589 (QTAL…AKEV).

Belongs to the hook family. In terms of assembly, homodimer. Interacts with microtubules via its N-terminus.

Its subcellular location is the cytoplasm. It is found in the cytoskeleton. It localises to the endosome. The protein resides in the synapse. In terms of biological role, involved in endocytic trafficking by stabilizing organelles of the endocytic pathway. Probably acts as a cytoskeletal linker protein required to tether endosome vesicles to the cytoskeleton. Involved in modulation of endocytosis at stages required for down-regulation of membrane proteins that control synapse size. Not involved in synaptic vesicle recycling. Required in R7 cells for boss endocytosis into multivesicular bodies (MVBs). Has a role in regulating adult longevity. This Drosophila virilis (Fruit fly) protein is Protein hook.